The following is a 132-amino-acid chain: Peptide methionine sulfoxide reductase MsrB (132 aa).

A MsrB domain is found at 8-130 (LDSWREELTE…NSASLKLVPR (123 aa)). Zn(2+) is bound by residues C47, C50, C96, and C99. C119 (nucleophile) is an active-site residue.

Belongs to the MsrB Met sulfoxide reductase family. The cofactor is Zn(2+).

The catalysed reaction is L-methionyl-[protein] + [thioredoxin]-disulfide + H2O = L-methionyl-(R)-S-oxide-[protein] + [thioredoxin]-dithiol. This Pseudomonas paraeruginosa (strain DSM 24068 / PA7) (Pseudomonas aeruginosa (strain PA7)) protein is Peptide methionine sulfoxide reductase MsrB.